The sequence spans 833 residues: Leucine--tRNA ligase (833 aa).

A 'HIGH' region motif is present at residues 41–52; it reads PYPSGAGLHVGH. A 'KMSKS' region motif is present at residues 610-614; sequence KMSKS. ATP is bound at residue Lys613.

Belongs to the class-I aminoacyl-tRNA synthetase family.

The protein localises to the cytoplasm. It carries out the reaction tRNA(Leu) + L-leucine + ATP = L-leucyl-tRNA(Leu) + AMP + diphosphate. In Streptococcus pneumoniae serotype 19F (strain G54), this protein is Leucine--tRNA ligase.